The following is a 217-amino-acid chain: Homeobox protein Hox-B7 (217 aa).

Positions 126-131 (IYPWMR) match the Antp-type hexapeptide motif. Residues 137-196 (RKRGRQTYTRYQTLELEKEFHYNRYLTRRRRIEIAHTLCLTERQIKIWFQNRRMKWKKEN) constitute a DNA-binding region (homeobox). The segment at 194 to 217 (KENKTAGPGTTGQDRAEAEEEEEE) is disordered.

It belongs to the Antp homeobox family. Forms a DNA-binding heterodimer with transcription factor PBX1.

Its subcellular location is the nucleus. Its function is as follows. Sequence-specific transcription factor which is part of a developmental regulatory system that provides cells with specific positional identities on the anterior-posterior axis. The chain is Homeobox protein Hox-B7 (HOXB7) from Homo sapiens (Human).